The sequence spans 217 residues: Thiamine-phosphate synthase (217 aa).

Residues 38–42 (QYRDK) and Asn70 each bind 4-amino-2-methyl-5-(diphosphooxymethyl)pyrimidine. Residues Asp71 and Asp90 each contribute to the Mg(2+) site. Position 109 (Ser109) interacts with 4-amino-2-methyl-5-(diphosphooxymethyl)pyrimidine. Residue 136 to 138 (SIT) coordinates 2-[(2R,5Z)-2-carboxy-4-methylthiazol-5(2H)-ylidene]ethyl phosphate. Lys139 provides a ligand contact to 4-amino-2-methyl-5-(diphosphooxymethyl)pyrimidine. Gly166 serves as a coordination point for 2-[(2R,5Z)-2-carboxy-4-methylthiazol-5(2H)-ylidene]ethyl phosphate.

Belongs to the thiamine-phosphate synthase family. It depends on Mg(2+) as a cofactor.

It carries out the reaction 2-[(2R,5Z)-2-carboxy-4-methylthiazol-5(2H)-ylidene]ethyl phosphate + 4-amino-2-methyl-5-(diphosphooxymethyl)pyrimidine + 2 H(+) = thiamine phosphate + CO2 + diphosphate. The catalysed reaction is 2-(2-carboxy-4-methylthiazol-5-yl)ethyl phosphate + 4-amino-2-methyl-5-(diphosphooxymethyl)pyrimidine + 2 H(+) = thiamine phosphate + CO2 + diphosphate. It catalyses the reaction 4-methyl-5-(2-phosphooxyethyl)-thiazole + 4-amino-2-methyl-5-(diphosphooxymethyl)pyrimidine + H(+) = thiamine phosphate + diphosphate. The protein operates within cofactor biosynthesis; thiamine diphosphate biosynthesis; thiamine phosphate from 4-amino-2-methyl-5-diphosphomethylpyrimidine and 4-methyl-5-(2-phosphoethyl)-thiazole: step 1/1. In terms of biological role, condenses 4-methyl-5-(beta-hydroxyethyl)thiazole monophosphate (THZ-P) and 2-methyl-4-amino-5-hydroxymethyl pyrimidine pyrophosphate (HMP-PP) to form thiamine monophosphate (TMP). This Nitrosococcus oceani (strain ATCC 19707 / BCRC 17464 / JCM 30415 / NCIMB 11848 / C-107) protein is Thiamine-phosphate synthase.